Consider the following 181-residue polypeptide: Small ribosomal subunit protein uS4 (181 aa).

An S4 RNA-binding domain is found at Arg-108–Asn-177. The tract at residues Gly-161–Arg-181 is disordered. The segment covering Gly-169–Arg-181 has biased composition (basic and acidic residues).

This sequence belongs to the universal ribosomal protein uS4 family. In terms of assembly, part of the 30S ribosomal subunit. Contacts protein S5. The interaction surface between S4 and S5 is involved in control of translational fidelity.

Its function is as follows. One of the primary rRNA binding proteins, it binds directly to 16S rRNA where it nucleates assembly of the body of the 30S subunit. With S5 and S12 plays an important role in translational accuracy. In Methanosphaerula palustris (strain ATCC BAA-1556 / DSM 19958 / E1-9c), this protein is Small ribosomal subunit protein uS4.